Reading from the N-terminus, the 110-residue chain is UPF0060 membrane protein PBPRB0495 (110 aa).

4 consecutive transmembrane segments (helical) span residues 7-27, 33-53, 63-83, and 85-105; these read VGLF…PYLW, TIWL…LLTL, AAYG…VDGI, and PTVW…IIMF.

It belongs to the UPF0060 family.

The protein localises to the cell inner membrane. The polypeptide is UPF0060 membrane protein PBPRB0495 (Photobacterium profundum (strain SS9)).